The primary structure comprises 172 residues: MASNFKKTTMASSAQRKRMSPKPELTEDQKQEIREAFDLFDADGTGTIDIKELKVAMRALGFEPKKEEIKKMISEIDKEGTGKMNFSDFLTVMTQKMSEKDTKEEILKAFKLFDDDETGKISFKNLKRVAKELGENLTDEELQEMIDEADRDGDGEVNEQEFLRIMKKTSLY.

Positions 1–14 (MASNFKKTTMASSA) are enriched in polar residues. The interval 1 to 31 (MASNFKKTTMASSAQRKRMSPKPELTEDQKQ) is disordered. Ala2 is subject to N-acetylalanine. A required for self-assembly region spans residues 2–25 (ASNFKKTTMASSAQRKRMSPKPEL). Phosphoserine is present on Ser20. A Glycyl lysine isopeptide (Lys-Gly) (interchain with G-Cter in SUMO2) cross-link involves residue Lys22. Residue Thr26 is modified to Phosphothreonine. EF-hand domains are found at residues 28–63 (DQKQ…LGFE), 64–99 (PKKE…KMSE), 101–136 (DTKE…LGEN), and 137–172 (LTDE…TSLY). Ca(2+) contacts are provided by Asp41, Asp43, Thr45, Thr47, and Glu52. Residues Asp150, Asp152, Asp154, Glu156, and Glu161 each contribute to the Ca(2+) site.

The protein belongs to the centrin family. Monomer. Homooligomer. Interacts with CCP110, SFI1. Component of the XPC complex composed of XPC, RAD23B and CETN2. Component of the nuclear pore complex (NPC)-associated TREX-2 complex (transcription and export complex 2), composed of at least GANP, 2 copies of ENY2, PCID2, SEM1/DSS1, and either centrin CETN2 or centrin CETN3. The TREX-2 complex also associates with ALYREF/ALY and with the nucleoporin NUP153. Interacts with USP49. Forms a microtubule-associated complex with POC5, POC1B and FAM161A. Interacts with CCDC15. As to expression, ubiquitously expressed in all adult tissues tested, with strongest expression in brain, spleen, kidney, small intestine and ovary. Also expressed in the NIH 3T3 fibroblast cell line and peripheral blood lymphocytes.

It localises to the cytoplasm. The protein localises to the cytoskeleton. The protein resides in the microtubule organizing center. Its subcellular location is the centrosome. It is found in the centriole. It localises to the nucleus. The protein localises to the nucleus envelope. The protein resides in the nuclear pore complex. Its function is as follows. Plays a fundamental role in microtubule organizing center structure and function. Required for centriole duplication and correct spindle formation. Has a role in regulating cytokinesis and genome stability via cooperation with CALM1 and CCP110. Involved in global genome nucleotide excision repair (GG-NER) by acting as component of the XPC complex. Cooperatively with Rad23b appears to stabilize Xpc. In vitro, stimulates DNA binding of the Xpc:Rad23b dimer. Functionally, the XPC complex is proposed to represent the first factor bound at the sites of DNA damage and together with other core recognition factors, Xpa, RPA and the TFIIH complex, is part of the pre-incision (or initial recognition) complex. The XPC complex recognizes a wide spectrum of damaged DNA characterized by distortions of the DNA helix such as single-stranded loops, mismatched bubbles or single-stranded overhangs. The orientation of XPC complex binding appears to be crucial for inducing a productive NER. XPC complex is proposed to recognize and to interact with unpaired bases on the undamaged DNA strand which is followed by recruitment of the TFIIH complex and subsequent scanning for lesions in the opposite strand in a 5'-to-3' direction by the NER machinery. Cyclobutane pyrimidine dimers (CPDs) which are formed upon UV-induced DNA damage esacpe detection by the XPC complex due to a low degree of structural perurbation. Instead they are detected by the UV-DDB complex which in turn recruits and cooperates with the XPC complex in the respective DNA repair. In terms of biological role, as a component of the TREX-2 complex, involved in the export of mRNAs to the cytoplasm through the nuclear pores. In Mus musculus (Mouse), this protein is Centrin-2 (Cetn2).